The primary structure comprises 291 residues: uncharacterized protein (291 aa).

Helical transmembrane passes span 5–23, 33–52, 69–91, 101–120, 127–144, 148–165, 172–194, 209–228, 235–257, and 262–284; these read ILLS…YFST, IFGF…VFLF, PLLI…LFLW, VSFG…RLVF, VKFL…SNIL, GLSW…TYFA, INDL…YFAW, LLLL…TYIV, INVL…FLIG, and SETI…EGLV.

Belongs to the EamA transporter family.

It localises to the cell membrane. This is an uncharacterized protein from Pasteurella multocida (strain Pm70).